Reading from the N-terminus, the 269-residue chain is Putative pyruvate, phosphate dikinase regulatory protein (269 aa).

Residue 147–154 (GVSRTSKT) coordinates ADP.

Belongs to the pyruvate, phosphate/water dikinase regulatory protein family. PDRP subfamily.

The catalysed reaction is N(tele)-phospho-L-histidyl/L-threonyl-[pyruvate, phosphate dikinase] + ADP = N(tele)-phospho-L-histidyl/O-phospho-L-threonyl-[pyruvate, phosphate dikinase] + AMP + H(+). It carries out the reaction N(tele)-phospho-L-histidyl/O-phospho-L-threonyl-[pyruvate, phosphate dikinase] + phosphate + H(+) = N(tele)-phospho-L-histidyl/L-threonyl-[pyruvate, phosphate dikinase] + diphosphate. Bifunctional serine/threonine kinase and phosphorylase involved in the regulation of the pyruvate, phosphate dikinase (PPDK) by catalyzing its phosphorylation/dephosphorylation. The polypeptide is Putative pyruvate, phosphate dikinase regulatory protein (Geotalea uraniireducens (strain Rf4) (Geobacter uraniireducens)).